Consider the following 312-residue polypeptide: Regulation of nuclear pre-mRNA domain-containing protein 1A (312 aa).

S2 bears the N-acetylserine mark. Residues 2 to 133 (SAFSEAALEK…QLKHALYGDK (132 aa)) form the CID domain. Phosphoserine occurs at positions 153, 156, and 285. The stretch at 244-286 (LADFLRCQKEALAEKEHKLEEYKRKLARVSLVRKELRARIQSL) forms a coiled coil.

Belongs to the UPF0400 (RTT103) family. As to quaternary structure, may form a heterodimer with RPRD1B. Associates with the RNA polymerase II subunit POLR2A (via CTD phosphorylated at 'Ser-2' and 'Ser-7' of the heptad repeats).

It is found in the nucleus. Its function is as follows. Interacts with phosphorylated C-terminal heptapeptide repeat domain (CTD) of the largest RNA polymerase II subunit POLR2A, and participates in dephosphorylation of the CTD by RPAP2. May act as a negative regulator of cyclin-D1 (CCND1) and cyclin-E (CCNE1) in the cell cycle. This is Regulation of nuclear pre-mRNA domain-containing protein 1A (Rprd1a) from Mus musculus (Mouse).